Reading from the N-terminus, the 126-residue chain is Aspartate 1-decarboxylase (126 aa).

Catalysis depends on S25, which acts as the Schiff-base intermediate with substrate; via pyruvic acid. S25 bears the Pyruvic acid (Ser) mark. T57 contributes to the substrate binding site. The active-site Proton donor is the Y58. 73–75 (GGA) contributes to the substrate binding site.

It belongs to the PanD family. As to quaternary structure, heterooctamer of four alpha and four beta subunits. Pyruvate serves as cofactor. Post-translationally, is synthesized initially as an inactive proenzyme, which is activated by self-cleavage at a specific serine bond to produce a beta-subunit with a hydroxyl group at its C-terminus and an alpha-subunit with a pyruvoyl group at its N-terminus.

Its subcellular location is the cytoplasm. The enzyme catalyses L-aspartate + H(+) = beta-alanine + CO2. It participates in cofactor biosynthesis; (R)-pantothenate biosynthesis; beta-alanine from L-aspartate: step 1/1. In terms of biological role, catalyzes the pyruvoyl-dependent decarboxylation of aspartate to produce beta-alanine. The polypeptide is Aspartate 1-decarboxylase (Stenotrophomonas maltophilia (strain R551-3)).